Reading from the N-terminus, the 480-residue chain is uncharacterized protein (480 aa).

Residues 131-207 form the PUA domain; sequence KKIIKIKNDV…KVVKVRFFIK (77 aa).

In the C-terminal section; belongs to the PAPS reductase family.

This is an uncharacterized protein from Methanocaldococcus jannaschii (strain ATCC 43067 / DSM 2661 / JAL-1 / JCM 10045 / NBRC 100440) (Methanococcus jannaschii).